Here is a 103-residue protein sequence, read N- to C-terminus: Large ribosomal subunit protein bL21 (103 aa).

Belongs to the bacterial ribosomal protein bL21 family. Part of the 50S ribosomal subunit. Contacts protein L20.

Functionally, this protein binds to 23S rRNA in the presence of protein L20. The sequence is that of Large ribosomal subunit protein bL21 from Borreliella burgdorferi (strain ZS7) (Borrelia burgdorferi).